Consider the following 539-residue polypeptide: MHCDQCQESIKGGCNVRGVCGKDELTAKLQDTLIYAAEGIALCAEGFEGKIDRKYGQFISECLFVTVTNTNFDDVAIVEQIRKALAMRDEVRALAGTTPAHDAANWSGSTKEEFLAKAAACSIDSLSADPDLRSLKSLILYGIKGLAAYTDHAAVLGYHDDDIYAFYVKGLSALTKELPADELLGLVMECGATAVKAMALLDKANTETYGNPEITTVKTGVGTRPGILISGHDLRDMEDLLKQTEGTGVDVYTHCEMLPAHYYPAFKKYDHFVGNYGNSWWSQDREFESFNGPILMTTNCIVPVRESYRGRMFTTGMAGYPGLKHIPARPDGGSKDFSEIIELAKTCKPPIEIENGEIVGGFAHTQVLALADKVVDAVKSGAIRRFVVMAGCDGRHNSRQYYTDVAETLPKDTVILTAGCAKYRYNKLELGDIGGIPRVLDAGQCNDSYSLAVIAMKLQEVFGLENINDLPISYDIAWYEQKAVTVLLALLFLGVKGIRLGPTLPEFLTPNIATTLVKLFDLKPIGTVEADVEAMMAGN.

[4Fe-4S] cluster contacts are provided by cysteine 3, cysteine 6, cysteine 14, and cysteine 20. 8 residues coordinate hybrid [4Fe-2O-2S] cluster: histidine 232, glutamate 256, cysteine 300, cysteine 392, cysteine 420, cysteine 445, glutamate 480, and lysine 482. Cysteine persulfide is present on cysteine 392.

This sequence belongs to the HCP family. [4Fe-4S] cluster serves as cofactor. Requires hybrid [4Fe-2O-2S] cluster as cofactor.

It localises to the cytoplasm. The enzyme catalyses A + NH4(+) + H2O = hydroxylamine + AH2 + H(+). Its function is as follows. Catalyzes the reduction of hydroxylamine to form NH(3) and H(2)O. This is Hydroxylamine reductase from Chlorobaculum tepidum (strain ATCC 49652 / DSM 12025 / NBRC 103806 / TLS) (Chlorobium tepidum).